The chain runs to 137 residues: Glutamate mutase sigma subunit (137 aa).

Residues 3–137 (KKTIVLGVIG…ADMKEVLGVE (135 aa)) enclose the B12-binding domain. Adenosylcob(III)alamin is bound by residues 13–17 (SDCHA), H16, 61–63 (SSL), and 93–97 (NIVVG).

This sequence belongs to the methylaspartate mutase GlmS subunit family. In terms of assembly, heterotetramer composed of 2 epsilon subunits (GlmE) and 2 sigma subunits (GlmS). GlmE exists as a homodimer and GlmS as a monomer. The cofactor is adenosylcob(III)alamin.

It carries out the reaction (2S,3S)-3-methyl-L-aspartate = L-glutamate. It functions in the pathway amino-acid degradation; L-glutamate degradation via mesaconate pathway; acetate and pyruvate from L-glutamate: step 1/4. Catalyzes the carbon skeleton rearrangement of L-glutamate to L-threo-3-methylaspartate ((2S,3S)-3-methylaspartate). This Clostridium tetanomorphum protein is Glutamate mutase sigma subunit.